The primary structure comprises 317 residues: Methionyl-tRNA formyltransferase (317 aa).

112 to 115 (SILP) is a (6S)-5,6,7,8-tetrahydrofolate binding site.

It belongs to the Fmt family.

The enzyme catalyses L-methionyl-tRNA(fMet) + (6R)-10-formyltetrahydrofolate = N-formyl-L-methionyl-tRNA(fMet) + (6S)-5,6,7,8-tetrahydrofolate + H(+). Its function is as follows. Attaches a formyl group to the free amino group of methionyl-tRNA(fMet). The formyl group appears to play a dual role in the initiator identity of N-formylmethionyl-tRNA by promoting its recognition by IF2 and preventing the misappropriation of this tRNA by the elongation apparatus. In Mannheimia succiniciproducens (strain KCTC 0769BP / MBEL55E), this protein is Methionyl-tRNA formyltransferase.